A 356-amino-acid polypeptide reads, in one-letter code: MRRELLLEKIDELKELMPWYVLEYYQSKLTVPYSFTTLYEYLKEYRRFFEWLIDSGVSNANKLADIPLETLEHLSKKDMESFILYLRERTLLNTKNKRQGVSQTTINRTLSALSSLYKYLTEEVENADGEPYFYRNVMKKVSTKKKKETLAARAENIKQKLFLGNETMEFLEYVDCEYEHKLSKRALSSFRKNKERDLAIIALLLASGVRLSEAVNLDLKDVNLNMMIIEVTRKGGKHDSVNVAGFAKPYLENYITIRRGRYKAKKTDLAFFLSEYRGVPNRMDASSIEKMVAKYSQDFKIRVTPHKLRHTLATRLYDATKSQVLVSHQLGHASTQVTDLYTHIVNDEQKNALDKL.

The region spanning 16-121 is the Core-binding (CB) domain; it reads LMPWYVLEYY…ALSSLYKYLT (106 aa). The Tyr recombinase domain occupies 169–354; the sequence is EFLEYVDCEY…VNDEQKNALD (186 aa). Residues arginine 210, lysine 234, histidine 306, arginine 309, and histidine 332 contribute to the active site. Tyrosine 341 acts as the O-(3'-phospho-DNA)-tyrosine intermediate in catalysis.

Belongs to the 'phage' integrase family. XerS subfamily.

It is found in the cytoplasm. FtsK is required for recombination. Site-specific tyrosine recombinase, which acts by catalyzing the cutting and rejoining of the recombining DNA molecules. Essential to convert dimers of the bacterial chromosome into monomers to permit their segregation at cell division. The chain is Tyrosine recombinase XerS from Streptococcus mutans serotype c (strain ATCC 700610 / UA159).